The sequence spans 1357 residues: MAYSYTEKKRIRKDFSKLPDVMDVPYLLAIQLDSYREFLQAGATKDQFRDVGLHAAFKSVFPIISYSGNAALEYVGYRLGEPAFDVKECVLRGVTYAVPLRVKVRLIIFDKESSNKAIKDIKEQEVYMGEIPLMTENGTFVINGTERVIVSQLHRSPGVFFDHDRGKTHSSGKLLYSARIIPYRGSWLDFEFDPKDCVFVRIDRRRKLPASVLLRALGYTTEQVLDAFYTTNVFHVRGENLSLELVPQRLRGEIAVLDILDDKGKVIVEQGRRITARHINQLEKAGIKELEVPLDYVLGRTTAKVIVHPATGEIIAECNTELNTEILAKIAKAQVVRIETLYTNDIDCGPFVSDTLKIDSTSNQLEALVEIYRMMRPGEPPTKDAAETLFNNLFFSPERYDLSAVGRMKFNRRIGRTEIEGSGVLCKEDIVAVLKTLVDIRNGKGIVDDIDHLGNRRVRCVGEMAENQFRVGLVRVERAVKERLSMAESEGLMPQDLINAKPVAAAVKEFFGSSQLSQFMDQNNPLSEITLKRRVSALGPGGLTRERAGFEVRDVHPTHYGRVCPIETPEGPNIGLINSLAAYARTNQYGFLESPYRVVKEGLVTEEIVFLSAIEEADHVIAQASAAMNDKQELIDELVAVRHLNEFTVKAPADVTLMDVSPKQVVSVAASLIPFLEHDDANRALMGSNMQRQAVPTLRADKPLVGTGMERNVARDSGVCVVARRGGVIDSVDASRIVVRVADDEVETGEAGVDIYNLTKYTRSNQNTCINQRPLVSKGDRVQRSDIMADGPSTDMGELALGQNMRIAFMAWNGFNFEDSICLSERVVQEDRFTTIHIQELTCVARDTKLGPEEITADIPNVGEAALNKLDEAGIVYVGAEVGAGDILVGKVTPKGETQLTPEEKLLRAIFGEKASDVKDTSLRVPTGTKGTVIDVQVFTRDGVERDARALSIEKSQLDEIRKDLNEEFRIVEGATFERLRSALVGRVAEGGAGLKKGQEITNEVLDGLEHGQWFKLRMAEDALNEQLEKAQAYIVDRRRLLDDKFEDKKRKLQQGDDLAPGVLKIVKVYLAIRRRIQPGDKMAGRHGNKGVVSVIMPVEDMPHDANGTPVDIVLNPLGVPSRMNVGQILETHLGLAAKGLGEKINRMLEEQRKVAELRKFLNEIYNEIGGRQESLEDLTDNEILDLAKNLRNGVPMATPVFDGAKESEIKAMLKLADMPESGQMQLFDGRTGNKFERAVTVGYMYMLKLNHLVDDKMHARSTGSYSLVTQQPLGGKAQFGGQRFGEMEVWALEAYGAAYTLQEMLTVKSDDVNGRTKMYKNIVDGDHRMEPGMPESFNVLIKEIRSLGIDIDLETE.

This sequence belongs to the RNA polymerase beta chain family. The RNAP catalytic core consists of 2 alpha, 1 beta, 1 beta' and 1 omega subunit. When a sigma factor is associated with the core the holoenzyme is formed, which can initiate transcription.

It carries out the reaction RNA(n) + a ribonucleoside 5'-triphosphate = RNA(n+1) + diphosphate. Functionally, DNA-dependent RNA polymerase catalyzes the transcription of DNA into RNA using the four ribonucleoside triphosphates as substrates. This is DNA-directed RNA polymerase subunit beta from Pseudomonas savastanoi pv. phaseolicola (strain 1448A / Race 6) (Pseudomonas syringae pv. phaseolicola (strain 1448A / Race 6)).